Consider the following 440-residue polypeptide: GTPase Der (440 aa).

2 EngA-type G domains span residues 4 to 169 (PVVA…PEED) and 178 to 353 (IKVA…DQAA). GTP contacts are provided by residues 10-17 (GRPNVGKS), 57-61 (DTGGI), 120-123 (NKVD), 184-191 (GKPNVGKS), 231-235 (DTAGI), and 296-299 (NKWD). A KH-like domain is found at 354–438 (MRISTGVLND…PIKFILREKE (85 aa)).

Belongs to the TRAFAC class TrmE-Era-EngA-EngB-Septin-like GTPase superfamily. EngA (Der) GTPase family. In terms of assembly, associates with the 50S ribosomal subunit.

Its function is as follows. GTPase that plays an essential role in the late steps of ribosome biogenesis. The sequence is that of GTPase Der from Acetivibrio thermocellus (strain ATCC 27405 / DSM 1237 / JCM 9322 / NBRC 103400 / NCIMB 10682 / NRRL B-4536 / VPI 7372) (Clostridium thermocellum).